The sequence spans 494 residues: Aspartyl/glutamyl-tRNA(Asn/Gln) amidotransferase subunit B (494 aa).

This sequence belongs to the GatB/GatE family. GatB subfamily. As to quaternary structure, heterotrimer of A, B and C subunits.

It carries out the reaction L-glutamyl-tRNA(Gln) + L-glutamine + ATP + H2O = L-glutaminyl-tRNA(Gln) + L-glutamate + ADP + phosphate + H(+). It catalyses the reaction L-aspartyl-tRNA(Asn) + L-glutamine + ATP + H2O = L-asparaginyl-tRNA(Asn) + L-glutamate + ADP + phosphate + 2 H(+). Its function is as follows. Allows the formation of correctly charged Asn-tRNA(Asn) or Gln-tRNA(Gln) through the transamidation of misacylated Asp-tRNA(Asn) or Glu-tRNA(Gln) in organisms which lack either or both of asparaginyl-tRNA or glutaminyl-tRNA synthetases. The reaction takes place in the presence of glutamine and ATP through an activated phospho-Asp-tRNA(Asn) or phospho-Glu-tRNA(Gln). The sequence is that of Aspartyl/glutamyl-tRNA(Asn/Gln) amidotransferase subunit B from Nitrobacter winogradskyi (strain ATCC 25391 / DSM 10237 / CIP 104748 / NCIMB 11846 / Nb-255).